We begin with the raw amino-acid sequence, 80 residues long: uncharacterized protein (80 aa).

This is an uncharacterized protein from Acidianus sp. F28 (AFV-2).